Here is a 338-residue protein sequence, read N- to C-terminus: Anthranilate phosphoribosyltransferase (338 aa).

5-phospho-alpha-D-ribose 1-diphosphate-binding positions include G81, 84–85, T89, 91–94, 109–117, and S121; these read GD, NIST, and KHGNRGVSS. G81 contacts anthranilate. S93 provides a ligand contact to Mg(2+). An anthranilate-binding site is contributed by N112. Residue R167 coordinates anthranilate. Mg(2+) is bound by residues D225 and E226.

It belongs to the anthranilate phosphoribosyltransferase family. In terms of assembly, homodimer. It depends on Mg(2+) as a cofactor.

The enzyme catalyses N-(5-phospho-beta-D-ribosyl)anthranilate + diphosphate = 5-phospho-alpha-D-ribose 1-diphosphate + anthranilate. It participates in amino-acid biosynthesis; L-tryptophan biosynthesis; L-tryptophan from chorismate: step 2/5. Its function is as follows. Catalyzes the transfer of the phosphoribosyl group of 5-phosphorylribose-1-pyrophosphate (PRPP) to anthranilate to yield N-(5'-phosphoribosyl)-anthranilate (PRA). This chain is Anthranilate phosphoribosyltransferase, found in Methanoculleus marisnigri (strain ATCC 35101 / DSM 1498 / JR1).